The following is a 668-amino-acid chain: SH2 domain-containing protein B (668 aa).

The disordered stretch occupies residues 373-411; the sequence is SVSGSEESYQQCNSHPQTSRQFENGNGMRLHEEDNSSID. The segment covering 374 to 396 has biased composition (polar residues); that stretch reads VSGSEESYQQCNSHPQTSRQFEN. The SH2 domain maps to 574–642; the sequence is WIEGFITKEE…DNICESSERY (69 aa).

In terms of processing, phosphorylated on tyrosine residues. Expressed in roots, leaves, stems and flowers.

This chain is SH2 domain-containing protein B, found in Arabidopsis thaliana (Mouse-ear cress).